Reading from the N-terminus, the 223-residue chain is Urease subunit alpha (223 aa).

The urease gamma stretch occupies residues 1 to 101 (MHFTQQQLQR…LVTIHEPIAN (101 aa)). Residues 102-223 (DDKIKAGEIF…LSKAKEKGFL (122 aa)) are urease beta.

In the N-terminal section; belongs to the urease gamma subunit family. The protein in the C-terminal section; belongs to the urease beta subunit family. Heterohexamer of 3 UreA (alpha) and 3 UreB (beta) subunits.

The protein localises to the cytoplasm. It carries out the reaction urea + 2 H2O + H(+) = hydrogencarbonate + 2 NH4(+). Its pathway is nitrogen metabolism; urea degradation; CO(2) and NH(3) from urea (urease route): step 1/1. In Campylobacter lari, this protein is Urease subunit alpha.